A 912-amino-acid polypeptide reads, in one-letter code: uncharacterized protein (912 aa).

Basic and acidic residues-rich tracts occupy residues 20 to 32 (IERL…AEPA) and 39 to 67 (HEYE…EDKT). The segment at 20 to 91 (IERLREQGRA…KPTLPQPETD (72 aa)) is disordered. Basic residues predominate over residues 68–77 (RHKKLKHRSR).

This is an uncharacterized protein from Penicillium chrysogenum virus (isolate Caston/2003) (PcV).